Reading from the N-terminus, the 106-residue chain is Nucleoid-associated protein BRADO0764 (106 aa).

It belongs to the YbaB/EbfC family. As to quaternary structure, homodimer.

Its subcellular location is the cytoplasm. The protein localises to the nucleoid. Its function is as follows. Binds to DNA and alters its conformation. May be involved in regulation of gene expression, nucleoid organization and DNA protection. The protein is Nucleoid-associated protein BRADO0764 of Bradyrhizobium sp. (strain ORS 278).